Consider the following 109-residue polypeptide: uncharacterized protein (109 aa).

This is an uncharacterized protein from Bacillus subtilis (strain 168).